A 132-amino-acid chain; its full sequence is Small ribosomal subunit protein uS8 (132 aa).

Belongs to the universal ribosomal protein uS8 family. Part of the 30S ribosomal subunit. Contacts proteins S5 and S12.

In terms of biological role, one of the primary rRNA binding proteins, it binds directly to 16S rRNA central domain where it helps coordinate assembly of the platform of the 30S subunit. This is Small ribosomal subunit protein uS8 from Chelativorans sp. (strain BNC1).